The following is a 505-amino-acid chain: MSEGPVKFEKNTVISVFGASGDLAKKKTFPALFGLFREGYLDPSTKIFGYARSKLSMEEDLKSRVLPHLKKPHGEADDSKVEQFFKMVSYISGNYDTDEGFDELRTQIEKFEKSANVDVPHRLFYLALPPSVFLTVAKQIKSRVYAENGITRVIVEKPFGHDLASARELQKNLGPLFKEEELYRIDHYLGKELVKNLLVLRFGNQFLNASWNRDNIQSVQISFKERFGTEGRGGYFDSIGIIRDVMQNHLLQIMTLLTMERPVSFDPESIRDEKVKVLKAVAPIDTDDVLLGQYGKSEDGSKPAYVDDDTVDKDSKCVTFAAMTFNIENERWEGVPIMMRAGKALNESKVEIRLQYKAVASGVFKDIPNNELVIRVQPDAAVYLKFNAKTPGLSNATQVTDLNLTYASRYQDFWIPEAYEVLIRDALLGDHSNFVRDDELDISWGIFTPLLKHIERPDGPTPEIYPYGSRGPKGLKEYMQKHKYVMPEKHPYAWPVTKPEDTKDN.

Ser-2 bears the N-acetylserine mark. NADP(+)-binding positions include Gly-18–Lys-25 and Arg-52. Phosphoserine is present on Ser-142. Tyr-145 bears the Phosphotyrosine mark. Lys-157 is a binding site for NADP(+). D-glucose 6-phosphate-binding positions include Lys-157, His-187–Lys-191, Glu-225, and Asp-244. His-249 acts as the Proton acceptor in catalysis. Arg-340 serves as a coordination point for NADP(+). Lys-343 lines the D-glucose 6-phosphate pocket. The NADP(+) site is built by Lys-349, Arg-353, and Arg-375. A D-glucose 6-phosphate-binding site is contributed by Gln-377. Residues Tyr-383–Lys-385 and Arg-470 each bind NADP(+).

The protein belongs to the glucose-6-phosphate dehydrogenase family.

The catalysed reaction is D-glucose 6-phosphate + NADP(+) = 6-phospho-D-glucono-1,5-lactone + NADPH + H(+). It functions in the pathway carbohydrate degradation; pentose phosphate pathway; D-ribulose 5-phosphate from D-glucose 6-phosphate (oxidative stage): step 1/3. In terms of biological role, catalyzes the rate-limiting step of the oxidative pentose-phosphate pathway, which represents a route for the dissimilation of carbohydrates besides glycolysis. The main function of this enzyme is to provide reducing power (NADPH) and pentose phosphates for fatty acid and nucleic acid synthesis. The protein is Glucose-6-phosphate 1-dehydrogenase (ZWF1) of Saccharomyces cerevisiae (strain ATCC 204508 / S288c) (Baker's yeast).